The following is a 260-amino-acid chain: Adenosylcobinamide-GDP ribazoletransferase (260 aa).

8 helical membrane-spanning segments follow: residues 3–23 (APLW…LPAW), 36–56 (FAPW…LVLI), 60–80 (WPTS…SGGL), 108–128 (VGAS…AALL), 133–153 (LAPL…LWAM), 180–200 (ALPA…LMIV), 206–226 (MVLM…PELL), and 239–259 (GASV…LLTA).

Belongs to the CobS family. Mg(2+) is required as a cofactor.

Its subcellular location is the cell inner membrane. It catalyses the reaction alpha-ribazole + adenosylcob(III)inamide-GDP = adenosylcob(III)alamin + GMP + H(+). The catalysed reaction is alpha-ribazole 5'-phosphate + adenosylcob(III)inamide-GDP = adenosylcob(III)alamin 5'-phosphate + GMP + H(+). It functions in the pathway cofactor biosynthesis; adenosylcobalamin biosynthesis; adenosylcobalamin from cob(II)yrinate a,c-diamide: step 7/7. Functionally, joins adenosylcobinamide-GDP and alpha-ribazole to generate adenosylcobalamin (Ado-cobalamin). Also synthesizes adenosylcobalamin 5'-phosphate from adenosylcobinamide-GDP and alpha-ribazole 5'-phosphate. This is Adenosylcobinamide-GDP ribazoletransferase from Prochlorococcus marinus (strain MIT 9303).